Consider the following 390-residue polypeptide: Endonuclease 8-like 1 (390 aa).

Catalysis depends on proline 2, which acts as the Schiff-base intermediate with DNA. The active-site Proton donor is glutamate 3. Residue lysine 54 is the Proton donor; for beta-elimination activity of the active site. Asparagine 176 provides a ligand contact to DNA. Residues 278–390 (TIWFQGDPGP…SLEPEGTSAS (113 aa)) form a disordered region. Over residues 291–301 (KGRKSRKKKSK) the composition is skewed to basic residues. The segment covering 335-347 (TATQRPEGTSLQQ) has biased composition (polar residues). Arginine 339 contributes to the DNA binding site. Arginine 339 (proton donor; for delta-elimination activity) is an active-site residue.

Belongs to the FPG family. In terms of tissue distribution, ubiquitous.

The protein resides in the cytoplasm. It is found in the cytoskeleton. The protein localises to the microtubule organizing center. It localises to the centrosome. Its subcellular location is the nucleus. The protein resides in the chromosome. The enzyme catalyses 2'-deoxyribonucleotide-(2'-deoxyribose 5'-phosphate)-2'-deoxyribonucleotide-DNA = a 3'-end 2'-deoxyribonucleotide-(2,3-dehydro-2,3-deoxyribose 5'-phosphate)-DNA + a 5'-end 5'-phospho-2'-deoxyribonucleoside-DNA + H(+). Involved in base excision repair of DNA damaged by oxidation or by mutagenic agents. Acts as a DNA glycosylase that recognizes and removes damaged bases. Has a preference for oxidized pyrimidines, such as thymine glycol, formamidopyrimidine (Fapy) and 5-hydroxyuracil. Has marginal activity towards 8-oxoguanine. Has AP (apurinic/apyrimidinic) lyase activity and introduces nicks in the DNA strand. Cleaves the DNA backbone by beta-delta elimination to generate a single-strand break at the site of the removed base with both 3'- and 5'-phosphates. Has DNA glycosylase/lyase activity towards mismatched uracil and thymine, in particular in U:C and T:C mismatches. Specifically binds 5-hydroxymethylcytosine (5hmC), suggesting that it acts as a specific reader of 5hmC. This Homo sapiens (Human) protein is Endonuclease 8-like 1 (NEIL1).